A 490-amino-acid chain; its full sequence is Ketol-acid reductoisomerase (NADP(+)) (490 aa).

The KARI N-terminal Rossmann domain maps to I16–S207. Residues C44–Q47, K67, S77, and D107–Q109 contribute to the NADP(+) site. Residue H131 is part of the active site. G157 contributes to the NADP(+) binding site. KARI C-terminal knotted domains lie at S208–V343 and Y344–M483. Mg(2+) contacts are provided by D216, E220, E388, and E392. A substrate-binding site is contributed by S413.

This sequence belongs to the ketol-acid reductoisomerase family. The cofactor is Mg(2+).

It catalyses the reaction (2R)-2,3-dihydroxy-3-methylbutanoate + NADP(+) = (2S)-2-acetolactate + NADPH + H(+). The catalysed reaction is (2R,3R)-2,3-dihydroxy-3-methylpentanoate + NADP(+) = (S)-2-ethyl-2-hydroxy-3-oxobutanoate + NADPH + H(+). It functions in the pathway amino-acid biosynthesis; L-isoleucine biosynthesis; L-isoleucine from 2-oxobutanoate: step 2/4. The protein operates within amino-acid biosynthesis; L-valine biosynthesis; L-valine from pyruvate: step 2/4. Its function is as follows. Involved in the biosynthesis of branched-chain amino acids (BCAA). Catalyzes an alkyl-migration followed by a ketol-acid reduction of (S)-2-acetolactate (S2AL) to yield (R)-2,3-dihydroxy-isovalerate. In the isomerase reaction, S2AL is rearranged via a Mg-dependent methyl migration to produce 3-hydroxy-3-methyl-2-ketobutyrate (HMKB). In the reductase reaction, this 2-ketoacid undergoes a metal-dependent reduction by NADPH to yield (R)-2,3-dihydroxy-isovalerate. The polypeptide is Ketol-acid reductoisomerase (NADP(+)) (Buchnera aphidicola subsp. Acyrthosiphon pisum (strain 5A)).